The chain runs to 154 residues: Endoribonuclease YbeY (154 aa).

Positions 120, 124, and 130 each coordinate Zn(2+).

It belongs to the endoribonuclease YbeY family. The cofactor is Zn(2+).

It is found in the cytoplasm. Single strand-specific metallo-endoribonuclease involved in late-stage 70S ribosome quality control and in maturation of the 3' terminus of the 16S rRNA. This chain is Endoribonuclease YbeY, found in Leptospira biflexa serovar Patoc (strain Patoc 1 / Ames).